A 184-amino-acid chain; its full sequence is Transcription termination/antitermination protein NusG (184 aa).

Positions 133–163 (EGDQVRVVSGPFADFTGTVTEINPERGKVKV) constitute a KOW domain.

The protein belongs to the NusG family.

Participates in transcription elongation, termination and antitermination. The sequence is that of Transcription termination/antitermination protein NusG from Thermus thermophilus (strain ATCC 27634 / DSM 579 / HB8).